The primary structure comprises 1211 residues: DNA-directed RNA polymerase subunit beta' (1211 aa).

Zn(2+)-binding residues include cysteine 60, cysteine 62, cysteine 75, and cysteine 78. The Mg(2+) site is built by aspartate 449, aspartate 451, and aspartate 453. The Zn(2+) site is built by cysteine 818, cysteine 892, cysteine 899, and cysteine 902.

The protein belongs to the RNA polymerase beta' chain family. In terms of assembly, the RNAP catalytic core consists of 2 alpha, 1 beta, 1 beta' and 1 omega subunit. When a sigma factor is associated with the core the holoenzyme is formed, which can initiate transcription. Mg(2+) serves as cofactor. Zn(2+) is required as a cofactor.

It carries out the reaction RNA(n) + a ribonucleoside 5'-triphosphate = RNA(n+1) + diphosphate. Functionally, DNA-dependent RNA polymerase catalyzes the transcription of DNA into RNA using the four ribonucleoside triphosphates as substrates. The sequence is that of DNA-directed RNA polymerase subunit beta' from Limosilactobacillus reuteri (strain DSM 20016) (Lactobacillus reuteri).